The chain runs to 355 residues: S-adenosylmethionine:tRNA ribosyltransferase-isomerase (355 aa).

The protein belongs to the QueA family. In terms of assembly, monomer.

It is found in the cytoplasm. The catalysed reaction is 7-aminomethyl-7-carbaguanosine(34) in tRNA + S-adenosyl-L-methionine = epoxyqueuosine(34) in tRNA + adenine + L-methionine + 2 H(+). It participates in tRNA modification; tRNA-queuosine biosynthesis. In terms of biological role, transfers and isomerizes the ribose moiety from AdoMet to the 7-aminomethyl group of 7-deazaguanine (preQ1-tRNA) to give epoxyqueuosine (oQ-tRNA). This is S-adenosylmethionine:tRNA ribosyltransferase-isomerase from Gluconacetobacter diazotrophicus (strain ATCC 49037 / DSM 5601 / CCUG 37298 / CIP 103539 / LMG 7603 / PAl5).